The sequence spans 75 residues: UPF0512 protein D (75 aa).

The tract at residues 1–20 (MAIFKSISSISNSTGSMGSS) is disordered.

Belongs to the UPF0512 family.

The polypeptide is UPF0512 protein D (Dictyostelium discoideum (Social amoeba)).